The sequence spans 83 residues: MKASMFLALAGLVLLFVVGYASESEEKEFPIELLSKIFAVDVFKGEERGCKGFGDSCAPGKNECCPNHACSNKHKWCKVYLGK.

Residues 1–21 (MKASMFLALAGLVLLFVVGYA) form the signal peptide. The propeptide occupies 22-48 (SESEEKEFPIELLSKIFAVDVFKGEER). Intrachain disulfides connect C50/C65, C57/C70, and C64/C77. Residue L81 is modified to Leucine amide.

This sequence belongs to the neurotoxin 10 (Hwtx-1) family. 15 (Hntx-3) subfamily. In terms of assembly, monomer. As to expression, expressed by the venom gland.

Its subcellular location is the secreted. Lethal neurotoxin. Selectively blocks tetrodotoxin-sensitive voltage-gated sodium channels (Nav). Does not affect tetrodotoxin-resistant voltage-gated sodium channels or calcium channels. This is Mu-theraphotoxin-Hhn2c from Cyriopagopus hainanus (Chinese bird spider).